The following is a 41-amino-acid chain: uncharacterized protein (41 aa).

This is an uncharacterized protein from Dictyostelium discoideum (Social amoeba).